Reading from the N-terminus, the 296-residue chain is Probable 6-phosphogluconolactonase 1 (296 aa).

It belongs to the glucosamine/galactosamine-6-phosphate isomerase family. 6-phosphogluconolactonase subfamily.

It catalyses the reaction 6-phospho-D-glucono-1,5-lactone + H2O = 6-phospho-D-gluconate + H(+). The protein operates within carbohydrate degradation; pentose phosphate pathway; D-ribulose 5-phosphate from D-glucose 6-phosphate (oxidative stage): step 2/3. Its function is as follows. Hydrolysis of 6-phosphogluconolactone to 6-phosphogluconate. This is Probable 6-phosphogluconolactonase 1 from Oryza sativa subsp. japonica (Rice).